A 639-amino-acid polypeptide reads, in one-letter code: mRNA export factor (639 aa).

Disordered stretches follow at residues 1–45 (MQAE…SLES), 63–287 (LLGD…KWGA), and 322–355 (CTARDPARAHDSGAECPPTEKRDERRTCAPSQPR). Residues 142–152 (PRRRTHARSRS) show a composition bias toward basic residues. Over residues 153 to 169 (PRAGSTSSQQPPSSSGG) the composition is skewed to low complexity. The segment covering 175–189 (VRREAGDRETSEKPA) has biased composition (basic and acidic residues). Residues 203–215 (HQCQSPPAQTASQ) are compositionally biased toward polar residues. Composition is skewed to basic and acidic residues over residues 234 to 247 (RTPHDHQERRHEGA) and 326 to 348 (DPARAHDSGAECPPTEKRDERRT). Zn(2+)-binding residues include cysteine 525, histidine 606, cysteine 610, and cysteine 615. The CHC2-type zinc-finger motif lies at 525–615 (CHLAASKSPL…HANVCRKEEC (91 aa)).

It belongs to the HHV-1 ICP27 protein family.

It localises to the host cytoplasm. The protein resides in the host nucleus. Its function is as follows. Multifunctional regulator of the expression of viral genes that mediates nuclear export of viral intronless mRNAs. This immediate early (EI) protein promotes the nuclear export of viral intronless mRNAs. This chain is mRNA export factor, found in Amazona oratrix (yellow-headed parrot).